The chain runs to 367 residues: Outer membrane protein P2 (367 aa).

The signal sequence occupies residues 1–20; it reads MKKTLAALIVGAFAASAANA.

This sequence belongs to the Gram-negative porin family. In terms of assembly, homotrimer.

It is found in the cell outer membrane. In terms of biological role, forms pores that allow passive diffusion of small molecules across the outer membrane. The protein is Outer membrane protein P2 (ompP2) of Haemophilus influenzae.